We begin with the raw amino-acid sequence, 159 residues long: Phosphopantetheine adenylyltransferase (159 aa).

Residue Thr-10 participates in substrate binding. ATP-binding positions include 10–11 (TF) and His-18. Residues Lys-42, Met-74, and Arg-88 each contribute to the substrate site. ATP-binding positions include 89–91 (GLR), Glu-99, and 124–130 (WSFISSS).

Belongs to the bacterial CoaD family. Homohexamer. Mg(2+) is required as a cofactor.

It localises to the cytoplasm. The catalysed reaction is (R)-4'-phosphopantetheine + ATP + H(+) = 3'-dephospho-CoA + diphosphate. Its pathway is cofactor biosynthesis; coenzyme A biosynthesis; CoA from (R)-pantothenate: step 4/5. In terms of biological role, reversibly transfers an adenylyl group from ATP to 4'-phosphopantetheine, yielding dephospho-CoA (dPCoA) and pyrophosphate. The polypeptide is Phosphopantetheine adenylyltransferase (Salmonella typhimurium (strain LT2 / SGSC1412 / ATCC 700720)).